The primary structure comprises 300 residues: GTPase Era (300 aa).

The Era-type G domain maps to 7 to 182; that stretch reads YCGFIAIVGR…LRKGVHHFPE (176 aa). The segment at 15-22 is G1; it reads GRPNVGKS. 15–22 provides a ligand contact to GTP; the sequence is GRPNVGKS. Residues 41–45 are G2; that stretch reads QTTRH. The tract at residues 62–65 is G3; sequence DTPG. GTP is bound by residues 62–66 and 124–127; these read DTPGL and NKVD. The tract at residues 124–127 is G4; that stretch reads NKVD. Residues 154 to 156 form a G5 region; that stretch reads ISA. In terms of domain architecture, KH type-2 spans 206–283; sequence TGEELPYSVT…HLELWVKVKS (78 aa).

This sequence belongs to the TRAFAC class TrmE-Era-EngA-EngB-Septin-like GTPase superfamily. Era GTPase family. As to quaternary structure, monomer.

It is found in the cytoplasm. The protein resides in the cell inner membrane. Its function is as follows. An essential GTPase that binds both GDP and GTP, with rapid nucleotide exchange. Plays a role in 16S rRNA processing and 30S ribosomal subunit biogenesis and possibly also in cell cycle regulation and energy metabolism. The protein is GTPase Era of Histophilus somni (strain 129Pt) (Haemophilus somnus).